A 212-amino-acid chain; its full sequence is Large ribosomal subunit protein uL3 (212 aa).

The disordered stretch occupies residues 147–166 (GSTGQNQSPGKVFKGKKMPG). Q153 is modified (N5-methylglutamine).

The protein belongs to the universal ribosomal protein uL3 family. As to quaternary structure, part of the 50S ribosomal subunit. Forms a cluster with proteins L14 and L19. Methylated by PrmB.

Functionally, one of the primary rRNA binding proteins, it binds directly near the 3'-end of the 23S rRNA, where it nucleates assembly of the 50S subunit. In Psychrobacter sp. (strain PRwf-1), this protein is Large ribosomal subunit protein uL3.